The primary structure comprises 516 residues: Cytochrome P450 1A2 (516 aa).

An O-linked (GlcNAc) serine glycan is attached at S69. F226 serves as a coordination point for substrate. Heme is bound at residue C458.

The protein belongs to the cytochrome P450 family. Interacts with PGRMC1; the interaction requires PGRMC1 homodimerization. The cofactor is heme.

It is found in the endoplasmic reticulum membrane. The protein resides in the microsome membrane. It catalyses the reaction an organic molecule + reduced [NADPH--hemoprotein reductase] + O2 = an alcohol + oxidized [NADPH--hemoprotein reductase] + H2O + H(+). The catalysed reaction is 17beta-estradiol + reduced [NADPH--hemoprotein reductase] + O2 = 2-hydroxy-17beta-estradiol + oxidized [NADPH--hemoprotein reductase] + H2O + H(+). It carries out the reaction 17beta-estradiol + reduced [NADPH--hemoprotein reductase] + O2 = 4-hydroxy-17beta-estradiol + oxidized [NADPH--hemoprotein reductase] + H2O + H(+). The enzyme catalyses estrone + reduced [NADPH--hemoprotein reductase] + O2 = 2-hydroxyestrone + oxidized [NADPH--hemoprotein reductase] + H2O + H(+). It catalyses the reaction estrone + reduced [NADPH--hemoprotein reductase] + O2 = 4-hydroxyestrone + oxidized [NADPH--hemoprotein reductase] + H2O + H(+). The catalysed reaction is cholesterol + reduced [NADPH--hemoprotein reductase] + O2 = 25-hydroxycholesterol + oxidized [NADPH--hemoprotein reductase] + H2O + H(+). It carries out the reaction all-trans-retinol + reduced [NADPH--hemoprotein reductase] + O2 = all-trans-retinal + oxidized [NADPH--hemoprotein reductase] + 2 H2O + H(+). The enzyme catalyses all-trans-retinal + reduced [NADPH--hemoprotein reductase] + O2 = all-trans-retinoate + oxidized [NADPH--hemoprotein reductase] + H2O + 2 H(+). It catalyses the reaction (5Z,8Z,11Z,14Z)-eicosatetraenoate + reduced [NADPH--hemoprotein reductase] + O2 = (14R,15S)-epoxy-(5Z,8Z,11Z)-eicosatrienoate + oxidized [NADPH--hemoprotein reductase] + H2O + H(+). The catalysed reaction is (5Z,8Z,11Z,14Z)-eicosatetraenoate + reduced [NADPH--hemoprotein reductase] + O2 = (14S,15R)-epoxy-(5Z,8Z,11Z)-eicosatrienoate + oxidized [NADPH--hemoprotein reductase] + H2O + H(+). It carries out the reaction (5Z,8Z,11Z,14Z,17Z)-eicosapentaenoate + reduced [NADPH--hemoprotein reductase] + O2 = (17R,18S)-epoxy-(5Z,8Z,11Z,14Z)-eicosatetraenoate + oxidized [NADPH--hemoprotein reductase] + H2O + H(+). The enzyme catalyses (4Z,7Z,10Z,13Z,16Z,19Z)-docosahexaenoate + reduced [NADPH--hemoprotein reductase] + O2 = (19R,20S)-epoxy-(4Z,7Z,10Z,13Z,16Z)-docosapentaenoate + oxidized [NADPH--hemoprotein reductase] + H2O + H(+). It catalyses the reaction (5S)-hydroperoxy-(6E,8Z,11Z,14Z)-eicosatetraenoate = 5-oxo-(6E,8Z,11Z,14Z)-eicosatetraenoate + H2O. The catalysed reaction is (12S)-hydroperoxy-(5Z,8Z,10E,14Z)-eicosatetraenoate = 12-oxo-(5Z,8Z,10E,14Z)-eicosatetraenoate + H2O. It carries out the reaction (15S)-hydroperoxy-(5Z,8Z,11Z,13E)-eicosatetraenoate = 15-oxo-(5Z,8Z,11Z,13E)-eicosatetraenoate + H2O. The enzyme catalyses (13S)-hydroperoxy-(9Z,11E)-octadecadienoate = 13-oxo-(9Z,11E)-octadecadienoate + H2O. It catalyses the reaction (5Z,8Z,11Z,14Z)-eicosatetraenoate + reduced [NADPH--hemoprotein reductase] + O2 = 13-hydroxy-(5Z,8Z,11Z,14Z)-eicosatetraenoate + oxidized [NADPH--hemoprotein reductase] + H2O + H(+). The catalysed reaction is (5Z,8Z,11Z,14Z)-eicosatetraenoate + reduced [NADPH--hemoprotein reductase] + O2 = 19-hydroxy-(5Z,8Z,11Z,14Z)-eicosatetraenoate + oxidized [NADPH--hemoprotein reductase] + H2O + H(+). It carries out the reaction (9Z,12Z)-octadecadienoate + reduced [NADPH--hemoprotein reductase] + O2 = 11-hydroxy-(9Z,12Z)-octadecadienoate + oxidized [NADPH--hemoprotein reductase] + H2O + H(+). It functions in the pathway cofactor metabolism; retinol metabolism. The protein operates within steroid metabolism; cholesterol metabolism. It participates in lipid metabolism; arachidonate metabolism. Its function is as follows. A cytochrome P450 monooxygenase involved in the metabolism of various endogenous substrates, including fatty acids, steroid hormones and vitamins. Mechanistically, uses molecular oxygen inserting one oxygen atom into a substrate, and reducing the second into a water molecule, with two electrons provided by NADPH via cytochrome P450 reductase (NADPH--hemoprotein reductase). Catalyzes the hydroxylation of carbon-hydrogen bonds. Exhibits high catalytic activity for the formation of hydroxyestrogens from estrone (E1) and 17beta-estradiol (E2), namely 2-hydroxy E1 and E2. Metabolizes cholesterol toward 25-hydroxycholesterol, a physiological regulator of cellular cholesterol homeostasis. May act as a major enzyme for all-trans retinoic acid biosynthesis in the liver. Catalyzes two successive oxidative transformation of all-trans retinol to all-trans retinal and then to the active form all-trans retinoic acid. Primarily catalyzes stereoselective epoxidation of the last double bond of polyunsaturated fatty acids (PUFA), displaying a strong preference for the (R,S) stereoisomer. Catalyzes bisallylic hydroxylation and omega-1 hydroxylation of PUFA. May also participate in eicosanoids metabolism by converting hydroperoxide species into oxo metabolites (lipoxygenase-like reaction, NADPH-independent). Plays a role in the oxidative metabolism of xenobiotics. Catalyzes the N-hydroxylation of heterocyclic amines and the O-deethylation of phenacetin. Metabolizes caffeine via N3-demethylation. The sequence is that of Cytochrome P450 1A2 (CYP1A2) from Macaca fuscata fuscata (Japanese macaque).